Reading from the N-terminus, the 359-residue chain is ATP-dependent 6-phosphofructokinase 1 (359 aa).

ATP contacts are provided by residues Gly-14, 78-79, and 115-118; these read KG and GDGS. Asp-116 is a binding site for Mg(2+). Substrate contacts are provided by residues 139 to 141, Arg-176, 183 to 185, Glu-236, Arg-277, and 283 to 286; these read TID, MGR, and HIQR. Residue Asp-141 is the Proton acceptor of the active site.

Belongs to the phosphofructokinase type A (PFKA) family. Mixed-substrate PFK group III subfamily. As to quaternary structure, homodimer or homotetramer. It depends on Mg(2+) as a cofactor.

The protein localises to the cytoplasm. It carries out the reaction beta-D-fructose 6-phosphate + ATP = beta-D-fructose 1,6-bisphosphate + ADP + H(+). It functions in the pathway carbohydrate degradation; glycolysis; D-glyceraldehyde 3-phosphate and glycerone phosphate from D-glucose: step 3/4. In terms of biological role, catalyzes the phosphorylation of D-fructose 6-phosphate to fructose 1,6-bisphosphate by ATP, the first committing step of glycolysis. This chain is ATP-dependent 6-phosphofructokinase 1, found in Nostoc sp. (strain PCC 7120 / SAG 25.82 / UTEX 2576).